A 472-amino-acid polypeptide reads, in one-letter code: Glutamate--tRNA ligase (472 aa).

The 'HIGH' region motif lies at 9 to 19; it reads PSPTGPLHIGS. The short motif at 237–241 is the 'KMSKS' region element; sequence KLSKR. ATP is bound at residue Lys240.

This sequence belongs to the class-I aminoacyl-tRNA synthetase family. Glutamate--tRNA ligase type 1 subfamily. As to quaternary structure, monomer.

Its subcellular location is the cytoplasm. It carries out the reaction tRNA(Glu) + L-glutamate + ATP = L-glutamyl-tRNA(Glu) + AMP + diphosphate. Its function is as follows. Catalyzes the attachment of glutamate to tRNA(Glu) in a two-step reaction: glutamate is first activated by ATP to form Glu-AMP and then transferred to the acceptor end of tRNA(Glu). In Buchnera aphidicola subsp. Baizongia pistaciae (strain Bp), this protein is Glutamate--tRNA ligase.